Consider the following 477-residue polypeptide: Cytochrome P450 monooxygenase poxC (477 aa).

A helical membrane pass occupies residues 24-41 (AWHFAVLSFVYVIARSIY). Cys-420 serves as a coordination point for heme.

This sequence belongs to the cytochrome P450 family. Requires heme as cofactor.

The protein resides in the membrane. It functions in the pathway secondary metabolite biosynthesis. Cytochrome P450 monooxygenase; part of the gene cluster that mediates the biosynthesis of oxaleimides, cytotoxic compounds containing an unusual disubstituted succinimide moiety. The first step of the pathway is provided by the HR-PKS poxF that serves in a new mode of collaborative biosynthesis with the PKS-NRPS poxE, by providing the olefin containing amino acid substrate via the synthesis of an ACP-bound dec-4-enoate. The cytochrome P450 monooxygenase poxM-catalyzed oxidation at the alpha-position creates the enzyme-bound 2-hydroxydec-4-enoyl-ACP thioester, which may be prone to spontaneous hydrolysis to yield 2-hydroxydec-4-enoic acid due to increased electrophilicity of the carbonyl. 2-hydroxydec-4-enoic acid can then be further oxidized by poxM to yield the alpha-ketoacid 2-oxodec-4-enoicacid, which is reductively aminated by the aminotransferase poxL to yield (S,E)-2-aminodec-4-enoic acid. The Hybrid PKS-NRPS synthetase poxE then performs condensation between the octaketide product of its PKS modules and the amino group of (S,E)-2-aminodec-4-enoic acid which is activated and incorporated by the adenylation domain. The resulting aminoacyl product can be cyclized by the Diels-Alderase PoxQ and reductively released by the reductive (R) domain of poxE to yield an aldehyde intermediate. The released aldehyde is then substrate for a Knoevenagel condensation by the hydrolyase poxO followed by an oxidation at the 5-position of the pyrrolidone ring. The presence of the olefin from the amino acid building block allows for migration of the substituted allyl group to occur. This allylic transposition reaction takes place in a conjugate addition, semipinacol-like fashion to yield a succinimide intermediate. Iterative two-electron oxidations of the C7 methyl of the succinimide intermediate to the carboxylic acid can be catalyzed by one of two remaining cytochrome P450 monooxygenasess poxC or poxD to yield oxaleimide A. Subsequent oxidation yields the maleimide scaffold oxaleimide I. Both oxaleimide A and oxaleimide I can undergo oxidative modifications in the decalin ring to yield the series of products oxaleimides B to H. In Penicillium oxalicum (strain 114-2 / CGMCC 5302) (Penicillium decumbens), this protein is Cytochrome P450 monooxygenase poxC.